Here is a 217-residue protein sequence, read N- to C-terminus: Phosphate-specific transport system accessory protein PhoU homolog 2 (217 aa).

This sequence belongs to the PhoU family. As to quaternary structure, homodimer.

The protein resides in the cytoplasm. Its function is as follows. Plays a role in the regulation of phosphate uptake. The chain is Phosphate-specific transport system accessory protein PhoU homolog 2 from Methanothermobacter thermautotrophicus (strain ATCC 29096 / DSM 1053 / JCM 10044 / NBRC 100330 / Delta H) (Methanobacterium thermoautotrophicum).